An 84-amino-acid polypeptide reads, in one-letter code: Small ribosomal subunit protein uS17 (84 aa).

This sequence belongs to the universal ribosomal protein uS17 family. As to quaternary structure, part of the 30S ribosomal subunit.

One of the primary rRNA binding proteins, it binds specifically to the 5'-end of 16S ribosomal RNA. The polypeptide is Small ribosomal subunit protein uS17 (Clostridioides difficile (strain 630) (Peptoclostridium difficile)).